The chain runs to 82 residues: Sodium channel neurotoxin MeuNaTxalpha-3 (82 aa).

A signal peptide spans 1–8; it reads LVMAGVES. The region spanning 10-80 is the LCN-type CS-alpha/beta domain; it reads RDGHIARNNN…VPIKVPGDCH (71 aa). Cystine bridges form between cysteine 20–cysteine 79, cysteine 24–cysteine 52, cysteine 38–cysteine 62, and cysteine 42–cysteine 64.

In terms of tissue distribution, expressed by the venom gland.

The protein resides in the secreted. Functionally, alpha toxins bind voltage-independently at site-3 of sodium channels (Nav) and inhibit the inactivation of the activated channels, thereby blocking neuronal transmission. This is Sodium channel neurotoxin MeuNaTxalpha-3 from Mesobuthus eupeus (Lesser Asian scorpion).